The chain runs to 103 residues: MRSLLLLTVLAALVVAILCYESHESMESYEINPFINRRNANTFMSPQQRWMAKAQERVREQRKPAYELNREACDDYKLCERYAMVYGYNAAYNRYFRQRRRAE.

A signal peptide spans 1 to 19 (MRSLLLLTVLAALVVAILC). Glu21 bears the 4-carboxyglutamate mark. Ser22, Ser25, and Ser28 each carry phosphoserine. Positions 51-97 (MAKAQERVREQRKPAYELNREACDDYKLCERYAMVYGYNAAYNRYFR) constitute a Gla domain. A 4-carboxyglutamate mark is found at Glu56, Glu60, Glu67, and Glu71. Cys73 and Cys79 form a disulfide bridge.

This sequence belongs to the osteocalcin/matrix Gla protein family. Post-translationally, requires vitamin K-dependent gamma-carboxylation for its function.

It localises to the secreted. Functionally, associates with the organic matrix of bone and cartilage. Thought to act as an inhibitor of bone formation. The chain is Matrix Gla protein (MGP) from Oryctolagus cuniculus (Rabbit).